We begin with the raw amino-acid sequence, 477 residues long: Bifunctional protein HldE (477 aa).

Residues 1–318 (MKVNLPAFER…ENAVRGRADT (318 aa)) form a ribokinase region. An ATP-binding site is contributed by 195-198 (NLSE). The active site involves aspartate 264. Positions 344 to 477 (MTNGVFDILH…IKKIQTESEK (134 aa)) are cytidylyltransferase.

This sequence in the N-terminal section; belongs to the carbohydrate kinase PfkB family. In the C-terminal section; belongs to the cytidylyltransferase family. As to quaternary structure, homodimer.

The enzyme catalyses D-glycero-beta-D-manno-heptose 7-phosphate + ATP = D-glycero-beta-D-manno-heptose 1,7-bisphosphate + ADP + H(+). The catalysed reaction is D-glycero-beta-D-manno-heptose 1-phosphate + ATP + H(+) = ADP-D-glycero-beta-D-manno-heptose + diphosphate. Its pathway is nucleotide-sugar biosynthesis; ADP-L-glycero-beta-D-manno-heptose biosynthesis; ADP-L-glycero-beta-D-manno-heptose from D-glycero-beta-D-manno-heptose 7-phosphate: step 1/4. It participates in nucleotide-sugar biosynthesis; ADP-L-glycero-beta-D-manno-heptose biosynthesis; ADP-L-glycero-beta-D-manno-heptose from D-glycero-beta-D-manno-heptose 7-phosphate: step 3/4. Catalyzes the phosphorylation of D-glycero-D-manno-heptose 7-phosphate at the C-1 position to selectively form D-glycero-beta-D-manno-heptose-1,7-bisphosphate. Functionally, catalyzes the ADP transfer from ATP to D-glycero-beta-D-manno-heptose 1-phosphate, yielding ADP-D-glycero-beta-D-manno-heptose. This chain is Bifunctional protein HldE, found in Salmonella paratyphi A (strain ATCC 9150 / SARB42).